Here is a 625-residue protein sequence, read N- to C-terminus: Chaperone protein HtpG (625 aa).

Residues 1 to 337 (MSTNQETRGF…TNDLPLNVSR (337 aa)) form an a; substrate-binding region. The interval 338–554 (EILQENKITA…NDEMTTQMAK (217 aa)) is b. Residues 555–625 (LFAAMGQKAP…FIKRMNKLLG (71 aa)) are c.

The protein belongs to the heat shock protein 90 family. Homodimer.

The protein localises to the cytoplasm. Its function is as follows. Molecular chaperone. Has ATPase activity. This is Chaperone protein HtpG from Actinobacillus pleuropneumoniae serotype 3 (strain JL03).